We begin with the raw amino-acid sequence, 329 residues long: Porphobilinogen deaminase (329 aa).

An S-(dipyrrolylmethanemethyl)cysteine modification is found at Cys-253.

It belongs to the HMBS family. As to quaternary structure, monomer. The cofactor is dipyrromethane.

The catalysed reaction is 4 porphobilinogen + H2O = hydroxymethylbilane + 4 NH4(+). Functionally, tetrapolymerization of the monopyrrole PBG into the hydroxymethylbilane pre-uroporphyrinogen in several discrete steps. The sequence is that of Porphobilinogen deaminase from Leifsonia xyli subsp. xyli (strain CTCB07).